We begin with the raw amino-acid sequence, 136 residues long: ATP synthase epsilon chain (136 aa).

The tract at residues D88 to D136 is disordered.

Belongs to the ATPase epsilon chain family. As to quaternary structure, F-type ATPases have 2 components, CF(1) - the catalytic core - and CF(0) - the membrane proton channel. CF(1) has five subunits: alpha(3), beta(3), gamma(1), delta(1), epsilon(1). CF(0) has three main subunits: a, b and c.

The protein localises to the cellular thylakoid membrane. Produces ATP from ADP in the presence of a proton gradient across the membrane. The chain is ATP synthase epsilon chain from Synechococcus sp. (strain WH7803).